We begin with the raw amino-acid sequence, 277 residues long: Basic leucine zipper transcriptional factor ATF-like 2 (277 aa).

3 disordered regions span residues 15–50, 126–146, and 191–256; these read LGESQKQLKKKQKNRVAAQRSRQKHTSKADALHQQH, FQTPGSSPRAQHLSPGPCSHE, and SFSK…QKSS. Residues 18-81 enclose the bZIP domain; it reads SQKQLKKKQK…AGWGRTLHLH (64 aa). Positions 20–42 are basic motif; that stretch reads KQLKKKQKNRVAAQRSRQKHTSK. Positions 41–50 are enriched in basic and acidic residues; it reads SKADALHQQH. The segment at 46-67 is leucine-zipper; that stretch reads LHQQHESLEKQNHALRKEIQAL. Composition is skewed to polar residues over residues 213–227 and 247–256; these read RQEQPTSGRLASSDS and GSSTHWQKSS.

It belongs to the bZIP family. As to quaternary structure, heterodimer; heterodimerizes with JUN family proteins.

The protein localises to the nucleus. AP-1 family transcription factor that controls the differentiation of lineage-specific cells in the immune system. Selectively suppresses CCN1 transcription and hence blocks the downstream cell proliferation signals produced by CCN1 and inhibits CCN1-induced anchorage-independent growth and invasion in several cancer types. Possibly acts by interfering with AP-1 binding to CCN1 promoter. Following infection, participates in the differentiation of CD8(+) thymic conventional dendritic cells in the immune system. Acts via the formation of a heterodimer with JUN family proteins that recognizes and binds DNA sequence 5'-TGA[CG]TCA-3' and regulates expression of target genes. The protein is Basic leucine zipper transcriptional factor ATF-like 2 (Batf2) of Mus musculus (Mouse).